A 260-amino-acid polypeptide reads, in one-letter code: MDKKIVIPGDLISENSKKAGYGTYVKNDKIYSLFCGIENLKEDKVGVIPLAGVYIPSANDVVIGIVIVVTPSNWIMDIASPYDGLFHVSEYPRRIESREMHEVLNVGDSIILRVKDVDNSMKVELALRDSSFHKLKTGQIVEVEPVKVPRVIGHGGSMISMLKKETNCSIFVGQNGRIWIDGKDDDVELLSKALRKIEAEAQRSGLTDRIYNFLKNERSKQKESKPAKFFKSGKKEVKLPKEDHSEEIYRKIDVLLDPNN.

An S1 motif domain is found at 59 to 128 (NDVVIGIVIV…NSMKVELALR (70 aa)). Residues 136–194 (KTGQIVEVEPVKVPRVIGHGGSMISMLKKETNCSIFVGQNGRIWIDGKDDDVELLSKAL) enclose the KH domain.

It belongs to the RRP4 family. Component of the archaeal exosome complex. Forms a trimer of Rrp4 and/or Csl4 subunits. The trimer associates with a hexameric ring-like arrangement composed of 3 Rrp41-Rrp42 heterodimers.

It localises to the cytoplasm. In terms of biological role, non-catalytic component of the exosome, which is a complex involved in RNA degradation. Increases the RNA binding and the efficiency of RNA degradation. Confers strong poly(A) specificity to the exosome. The polypeptide is Exosome complex component Rrp4 (Methanosarcina barkeri (strain Fusaro / DSM 804)).